Consider the following 102-residue polypeptide: MQTQCTVLQLLVLVALCSCGGILKEKYFQKGVDYLTSHIPIPVVKDVVKSAAKQLVHKISKNQQLCLIVDTVQWCNKSCLAAENKEGYCHGTKCKCGIKVSY.

Residues 1–19 form the signal peptide; the sequence is MQTQCTVLQLLVLVALCSC. Residues 63–102 form the BetaSPN-type CS-alpha/beta domain; sequence QQLCLIVDTVQWCNKSCLAAENKEGYCHGTKCKCGIKVSY. Disulfide bonds link Cys-66-Cys-89, Cys-75-Cys-94, and Cys-79-Cys-96.

The protein belongs to the long chain scorpion toxin family. Class 3 subfamily. Expressed by the venom gland.

Its subcellular location is the secreted. In terms of biological role, inhibits voltage-gated potassium channels. This chain is Scorpine-like-2, found in Urodacus yaschenkoi (Inland robust scorpion).